The chain runs to 226 residues: Enolase-phosphatase E1 (226 aa).

This sequence belongs to the HAD-like hydrolase superfamily. MasA/MtnC family. Monomer. Requires Mg(2+) as cofactor.

It catalyses the reaction 5-methylsulfanyl-2,3-dioxopentyl phosphate + H2O = 1,2-dihydroxy-5-(methylsulfanyl)pent-1-en-3-one + phosphate. Its pathway is amino-acid biosynthesis; L-methionine biosynthesis via salvage pathway; L-methionine from S-methyl-5-thio-alpha-D-ribose 1-phosphate: step 3/6. It functions in the pathway amino-acid biosynthesis; L-methionine biosynthesis via salvage pathway; L-methionine from S-methyl-5-thio-alpha-D-ribose 1-phosphate: step 4/6. Bifunctional enzyme that catalyzes the enolization of 2,3-diketo-5-methylthiopentyl-1-phosphate (DK-MTP-1-P) into the intermediate 2-hydroxy-3-keto-5-methylthiopentenyl-1-phosphate (HK-MTPenyl-1-P), which is then dephosphorylated to form the acireductone 1,2-dihydroxy-3-keto-5-methylthiopentene (DHK-MTPene). The chain is Enolase-phosphatase E1 from Shewanella baltica (strain OS223).